Consider the following 206-residue polypeptide: Interleukin-24 (206 aa).

Positions 1-51 (MNFQQRLQSLWTLARPFCPPLLATASQMQMVVLPCLGFTLLLWSQVSGAQG) are cleaved as a signal peptide. Cysteines 59 and 106 form a disulfide. N-linked (GlcNAc...) asparagine glycans are attached at residues Asn-85 and Asn-99. Residue Lys-122 forms a Glycyl lysine isopeptide (Lys-Gly) (interchain with G-Cter in ubiquitin) linkage. A glycan (N-linked (GlcNAc...) asparagine) is linked at Asn-126.

It belongs to the IL-10 family. Glycosylated. In terms of processing, ubiquitination at Lys-122 promotes proteasomal degradation. Up-regulated in melanoma cells induced to terminally differentiate.

The protein resides in the secreted. In terms of biological role, multifunctional cytokine mainly produced by T-cells that plays a regulatory role in immune response, tissue homeostasis, host defense, and oncogenesis. Possesses antiviral functions and induces the type I interferon response during influenza infection. Signals through two receptor complexes IL20RA/IL20RB or IL20RB/IL22RA1. In turn, stimulates the JAK1-STAT3 and MAPK pathways and promotes the secretion of pro-inflammatory mediators including IL8 and MMP1. Intracellularly, maintains endoplasmic reticulum homeostasis by restricting the eIF2alpha-CHOP pathway-mediated stress signal. In addition, acts as a quality control mechanism for the ubiquitin proteasome system by alerting the cell to proteasome dysfunction through activation of PKR/EIF2AK2. This is Interleukin-24 (IL24) from Homo sapiens (Human).